The chain runs to 276 residues: Probable ribose-5-phosphate isomerase 3, chloroplastic (276 aa).

The N-terminal 39 residues, 1-39, are a transit peptide targeting the chloroplast; it reads MASLSFVSSSHLTLRTPSIALRSTGSSPRTSVSFSVKAQ. S40 carries the N-acetylserine modification. S108 is subject to Phosphoserine.

Belongs to the ribose 5-phosphate isomerase family. Post-translationally, phosphorylated by SRK2C.

Its subcellular location is the plastid. The protein localises to the chloroplast. It catalyses the reaction aldehydo-D-ribose 5-phosphate = D-ribulose 5-phosphate. It participates in carbohydrate degradation; pentose phosphate pathway; D-ribose 5-phosphate from D-ribulose 5-phosphate (non-oxidative stage): step 1/1. Its function is as follows. Catalyzes the reversible conversion of ribose-5-phosphate to ribulose 5-phosphate. This Arabidopsis thaliana (Mouse-ear cress) protein is Probable ribose-5-phosphate isomerase 3, chloroplastic (RPI3).